Consider the following 379-residue polypeptide: Homoserine O-succinyltransferase (379 aa).

The AB hydrolase-1 domain occupies 48–357; that stretch reads NAVLICHALS…SAHGHDAFLM (310 aa). Ser154 functions as the Nucleophile in the catalytic mechanism. Substrate is bound at residue Arg224. Catalysis depends on residues Asp319 and His352. Asp353 serves as a coordination point for substrate.

It belongs to the AB hydrolase superfamily. MetX family. As to quaternary structure, homodimer.

It is found in the cytoplasm. It catalyses the reaction L-homoserine + succinyl-CoA = O-succinyl-L-homoserine + CoA. The protein operates within amino-acid biosynthesis; L-methionine biosynthesis via de novo pathway; O-succinyl-L-homoserine from L-homoserine: step 1/1. Activity increases in the presence of MetW. Transfers a succinyl group from succinyl-CoA to L-homoserine, forming succinyl-L-homoserine. This Neisseria gonorrhoeae protein is Homoserine O-succinyltransferase.